The chain runs to 396 residues: N-acyl-phosphatidylethanolamine-hydrolyzing phospholipase D (396 aa).

M1 carries the post-translational modification N-acetylmethionine. 2 stretches are compositionally biased toward polar residues: residues 1–12 and 26–37; these read MDENENSQSPAP and NSVQNSGGSESS. Positions 1-41 are disordered; that stretch reads MDENENSQSPAPSHQYPKETLRKRQNSVQNSGGSESSRLSR. Positions 185 and 187 each coordinate Zn(2+). Y188 contributes to the an N-acyl-1,2-diacyl-sn-glycero-3-phosphoethanolamine binding site. 3 residues coordinate Zn(2+): D189, H190, and H253. K256 lines the deoxycholate pocket. D284 provides a ligand contact to Zn(2+). An N-acyl-1,2-diacyl-sn-glycero-3-phosphoethanolamine is bound at residue H321. Residue H343 participates in Zn(2+) binding. Residue A348 participates in deoxycholate binding.

It belongs to the NAPE-PLD family. In terms of assembly, homodimer. Bile acids promote the assembly of inactive monomers into an active dimer and enable catalysis. The cofactor is Zn(2+). As to expression, widely expressed. Highest expression in brain, kidney and testis (at protein level). Expressed in adipose tissue (at protein level).

It localises to the golgi apparatus membrane. The protein localises to the early endosome membrane. It is found in the nucleus envelope. Its subcellular location is the nucleus. The protein resides in the nucleoplasm. It carries out the reaction an N-acyl-1,2-diacyl-sn-glycero-3-phosphoethanolamine + H2O = an N-acylethanolamine + a 1,2-diacyl-sn-glycero-3-phosphate + H(+). The catalysed reaction is N-butanoyl-1-hexadecanoyl-2-(9Z,12Z-octadecadienoyl)-sn-glycero-3-phosphoethanolamine + H2O = N-butanoyl ethanolamine + 1-hexadecanoyl-2-(9Z,12Z-octadecadienoyl)-sn-glycero-3-phosphate + H(+). The enzyme catalyses N-hexanoyl-1-hexadecanoyl-2-(9Z,12Z-octadecadienoyl)-sn-glycero-3-phosphoethanolamine + H2O = N-hexanoyl ethanolamine + 1-hexadecanoyl-2-(9Z,12Z-octadecadienoyl)-sn-glycero-3-phosphate + H(+). It catalyses the reaction N-octanoyl-1-hexadecanoyl-2-(9Z,12Z-octadecadienoyl)-sn-glycero-3-phosphoethanolamine + H2O = N-octanoyl ethanolamine + 1-hexadecanoyl-2-(9Z,12Z-octadecadienoyl)-sn-glycero-3-phosphate + H(+). It carries out the reaction N-decanoyl-1-hexadecanoyl-2-(9Z,12Z-octadecadienoyl)-sn-glycero-3-phosphoethanolamine + H2O = N-decanoyl ethanolamine + 1-hexadecanoyl-2-(9Z,12Z-octadecadienoyl)-sn-glycero-3-phosphate + H(+). The catalysed reaction is N-dodecanoyl-1,2-di-(9Z-octadecenoyl)-sn-glycero-3-phosphoethanolamine + H2O = N-dodecanoylethanolamine + 1,2-di-(9Z-octadecenoyl)-sn-glycero-3-phosphate + H(+). The enzyme catalyses N-tetradecanoyl-1,2-di-(9Z-octadecenoyl)-sn-glycero-3-phosphoethanolamine + H2O = N-tetradecanoylethanolamine + 1,2-di-(9Z-octadecenoyl)-sn-glycero-3-phosphate + H(+). It catalyses the reaction N-hexadecanoyl-1,2-di-(9Z-octadecenoyl)-sn-glycero-3-phosphoethanolamine + H2O = N-hexadecanoylethanolamine + 1,2-di-(9Z-octadecenoyl)-sn-glycero-3-phosphate + H(+). It carries out the reaction N,1-dihexadecanoyl-2-(9Z,12Z-octadecadienoyl)-sn-glycero-3-phosphoethanolamine + H2O = 1-hexadecanoyl-2-(9Z,12Z-octadecadienoyl)-sn-glycero-3-phosphate + N-hexadecanoylethanolamine + H(+). The catalysed reaction is N-octadecanoyl-1,2-di-(9Z-octadecenoyl)-sn-glycero-3-phosphoethanolamine + H2O = N-octadecanoyl ethanolamine + 1,2-di-(9Z-octadecenoyl)-sn-glycero-3-phosphate + H(+). The enzyme catalyses N,1,2-tri-(9Z-octadecenoyl)-sn-glycero-3-phosphoethanolamine + H2O = N-(9Z-octadecenoyl) ethanolamine + 1,2-di-(9Z-octadecenoyl)-sn-glycero-3-phosphate + H(+). It catalyses the reaction N-(5Z,8Z,11Z,14Z-eicosatetraenoyl)-1,2-diacyl-sn-glycero-3-phosphoethanolamine + H2O = N-(5Z,8Z,11Z,14Z-eicosatetraenoyl)-ethanolamine + a 1,2-diacyl-sn-glycero-3-phosphate + H(+). It carries out the reaction N-(5Z,8Z,11Z,14Z-eicosatetraenoyl)-1,2-di-(9Z-octadecenoyl)-sn-glycero-3-phosphoethanolamine + H2O = N-(5Z,8Z,11Z,14Z-eicosatetraenoyl)-ethanolamine + 1,2-di-(9Z-octadecenoyl)-sn-glycero-3-phosphate + H(+). The catalysed reaction is 1-O-(1Z-octadecenoyl)-2-(9Z-octadecenoyl)-sn-glycero-3-phospho-N-hexadecanoyl-ethanolamine + H2O = 1-O-(1Z-octadecenoyl)-2-(9Z-octadecenoyl)-sn-glycero-3-phosphate + N-hexadecanoylethanolamine + H(+). The enzyme catalyses N,1-diacyl-sn-glycero-3-phosphoethanolamine + H2O = an N-acylethanolamine + a 1-acyl-sn-glycero-3-phosphate + H(+). It catalyses the reaction N,1-dihexadecanoyl-sn-glycero-3-phosphoethanolamine + H2O = N-hexadecanoylethanolamine + 1-hexadecanoyl-sn-glycero-3-phosphate + H(+). It carries out the reaction N-(5Z,8Z,11Z,14Z-eicosatetraenoyl)-1-(9Z-octadecenoyl)-sn-glycero-3-phosphoethanolamine + H2O = N-(5Z,8Z,11Z,14Z-eicosatetraenoyl)-ethanolamine + 1-(9Z-octadecenoyl)-sn-glycero-3-phosphate + H(+). Its activity is regulated as follows. Activated by divalent cations. Activated by bile acids. Activated by membrane phospholipids such as phosphatidylethanolamines. Inhibited by cardiolipins. Its function is as follows. D-type phospholipase that hydrolyzes N-acyl-phosphatidylethanolamines (NAPEs) to produce bioactive N-acylethanolamines/fatty acid ethanolamides (NAEs/FAEs) and phosphatidic acid. Cleaves the terminal phosphodiester bond of diacyl- and alkenylacyl-NAPEs, primarily playing a role in the generation of long-chain saturated and monounsaturated NAEs in the brain. May control NAPE homeostasis in dopaminergic neuron membranes and regulate neuron survival, partly through RAC1 activation. As a regulator of lipid metabolism in the adipose tissue, mediates the crosstalk between adipocytes, gut microbiota and immune cells to control body temperature and weight. In particular, regulates energy homeostasis by promoting cold-induced brown or beige adipocyte differentiation program to generate heat from fatty acids and glucose. Has limited D-type phospholipase activity toward N-acyl lyso-NAPEs. This chain is N-acyl-phosphatidylethanolamine-hydrolyzing phospholipase D (Napepld), found in Rattus norvegicus (Rat).